The following is a 103-amino-acid chain: Small ribosomal subunit protein uS10 (103 aa).

It belongs to the universal ribosomal protein uS10 family. In terms of assembly, part of the 30S ribosomal subunit.

In terms of biological role, involved in the binding of tRNA to the ribosomes. The chain is Small ribosomal subunit protein uS10 from Marinomonas sp. (strain MWYL1).